A 206-amino-acid polypeptide reads, in one-letter code: Large ribosomal subunit protein uL4 (206 aa).

Positions 66–77 (QKGTGRARHHSA) are enriched in basic residues. The segment at 66–96 (QKGTGRARHHSARAPQFRGGGQAHGPVVRSH) is disordered.

The protein belongs to the universal ribosomal protein uL4 family. As to quaternary structure, part of the 50S ribosomal subunit.

Its function is as follows. One of the primary rRNA binding proteins, this protein initially binds near the 5'-end of the 23S rRNA. It is important during the early stages of 50S assembly. It makes multiple contacts with different domains of the 23S rRNA in the assembled 50S subunit and ribosome. Functionally, forms part of the polypeptide exit tunnel. The protein is Large ribosomal subunit protein uL4 of Brucella anthropi (strain ATCC 49188 / DSM 6882 / CCUG 24695 / JCM 21032 / LMG 3331 / NBRC 15819 / NCTC 12168 / Alc 37) (Ochrobactrum anthropi).